Here is a 32-residue protein sequence, read N- to C-terminus: uncharacterized protein (32 aa).

This is an uncharacterized protein from Mastigocladus laminosus (Fischerella sp.).